The chain runs to 69 residues: Pleurain-A4 (69 aa).

The signal sequence occupies residues 1-22 (MFTLKKTLLLLFFLGTISISLC). Residues 23–43 (KQERDADEDDGRKMTEEEVKR) constitute a propeptide that is removed on maturation. An intrachain disulfide couples Cys63 to Cys69.

Belongs to the frog skin active peptide (FSAP) family. Pleurain subfamily. As to expression, expressed by the skin glands.

The protein localises to the secreted. Antimicrobial peptide. Has activity against Gram-positive and -negative bacteria, and fungi. Has little hemolytic activity on red blood cells. This chain is Pleurain-A4, found in Nidirana pleuraden (Yunnan pond frog).